A 677-amino-acid polypeptide reads, in one-letter code: Pro-neuregulin-1, membrane-bound isoform (677 aa).

The segment covering 1–12 (MAEKKKVKEGKG) has biased composition (basic and acidic residues). Disordered regions lie at residues 1-43 (MAEK…KEIK) and 78-106 (GAKN…ISKA). Residues 1–260 (MAEKKKVKEG…MEAEELYQKR (260 aa)) lie on the Extracellular side of the membrane. Residues 13–24 (RKGKGKKDRKGK) are compositionally biased toward basic residues. Positions 37-132 (PKLKEIKTQS…GNDTVTVNVT (96 aa)) constitute an Ig-like C2-type domain. C57 and C116 are disulfide-bonded. Residues 78–91 (GAKNKPDSKPEHIK) show a composition bias toward basic and acidic residues. 2 N-linked (GlcNAc...) asparagine glycosylation sites follow: N124 and N130. The EGF-like domain maps to 188 to 232 (HLIKCSDKEKTYCVNGGECYVLNGITSSNQFMCKCKPGFTGARCT). Disulfide bonds link C192–C206, C200–C220, and C222–C231. Residues 261-280 (VLTITGICIDLLVVGDMCVV) form a helical membrane-spanning segment. Topologically, residues 281 to 677 (DAYCKTKKQR…RKMTCKTLFI (397 aa)) are cytoplasmic. Residues 294–315 (NDRLRQSLRERNKNITNKDNRP) are compositionally biased toward basic and acidic residues. 5 disordered regions span residues 294-326 (NDRL…PRKN), 350-375 (ETSF…PSHS), 397-418 (SVEN…GIGG), 457-479 (VEFK…ESSL), and 503-617 (PPRL…FLSI). Low complexity predominate over residues 351–375 (TSFSTSHYTSTTHHSTTVTQTPSHS). The segment covering 397 to 407 (SVENSRHTSPT) has biased composition (polar residues). The span at 505–515 (RLREKRYDRKT) shows a compositional bias: basic and acidic residues. Basic residues predominate over residues 568 to 578 (VNSRRQKRTKP). Residues 591–600 (DSSSESSTSE) are compositionally biased toward low complexity.

The protein belongs to the neuregulin family. Proteolytic cleavage close to the plasma membrane on the external face leads to the release of the soluble growth factor form. In terms of processing, extensive glycosylation precedes the proteolytic cleavage. Isoform alpha1 is expressed in brain and muscle. Isoform CRD is expressed in brain and spinal cord, but at very low level in muscle.

The protein localises to the cell membrane. It is found in the secreted. Functionally, direct ligand for the ERBB tyrosine kinase receptors. Induces expression of acetylcholine receptor in synaptic nuclei. This Xenopus laevis (African clawed frog) protein is Pro-neuregulin-1, membrane-bound isoform (nrg1).